Reading from the N-terminus, the 145-residue chain is Large ribosomal subunit protein uL13 (145 aa).

Residues 72–91 (DKMYHRHSNHPGGLKSISAG) form a disordered region.

This sequence belongs to the universal ribosomal protein uL13 family. As to quaternary structure, part of the 50S ribosomal subunit.

Functionally, this protein is one of the early assembly proteins of the 50S ribosomal subunit, although it is not seen to bind rRNA by itself. It is important during the early stages of 50S assembly. The protein is Large ribosomal subunit protein uL13 of Staphylococcus epidermidis (strain ATCC 12228 / FDA PCI 1200).